The sequence spans 82 residues: Cytochrome b-c1 complex subunit 8 (82 aa).

The Mitochondrial matrix portion of the chain corresponds to methionine 1–leucine 39. Phosphoserine is present on serine 16. The residue at position 33 (lysine 33) is an N6-acetyllysine; alternate. At lysine 33 the chain carries N6-succinyllysine; alternate. Residues arginine 40–alanine 68 form a helical membrane-spanning segment. Residues glutamine 69 to lysine 82 are Mitochondrial intermembrane-facing.

This sequence belongs to the UQCRQ/QCR8 family. In terms of assembly, component of the ubiquinol-cytochrome c oxidoreductase (cytochrome b-c1 complex, complex III, CIII), a multisubunit enzyme composed of 11 subunits. The complex is composed of 3 respiratory subunits cytochrome b, cytochrome c1 and Rieske protein UQCRFS1, 2 core protein subunits UQCRC1/QCR1 and UQCRC2/QCR2, and 6 low-molecular weight protein subunits UQCRH/QCR6, UQCRB/QCR7, UQCRQ/QCR8, UQCR10/QCR9, UQCR11/QCR10 and subunit 9, the cleavage product of Rieske protein UQCRFS1. The complex exists as an obligatory dimer and forms supercomplexes (SCs) in the inner mitochondrial membrane with NADH-ubiquinone oxidoreductase (complex I, CI) and cytochrome c oxidase (complex IV, CIV), resulting in different assemblies (supercomplex SCI(1)III(2)IV(1) and megacomplex MCI(2)III(2)IV(2)). Interacts with UQCC6.

The protein localises to the mitochondrion inner membrane. In terms of biological role, component of the ubiquinol-cytochrome c oxidoreductase, a multisubunit transmembrane complex that is part of the mitochondrial electron transport chain which drives oxidative phosphorylation. The respiratory chain contains 3 multisubunit complexes succinate dehydrogenase (complex II, CII), ubiquinol-cytochrome c oxidoreductase (cytochrome b-c1 complex, complex III, CIII) and cytochrome c oxidase (complex IV, CIV), that cooperate to transfer electrons derived from NADH and succinate to molecular oxygen, creating an electrochemical gradient over the inner membrane that drives transmembrane transport and the ATP synthase. The cytochrome b-c1 complex catalyzes electron transfer from ubiquinol to cytochrome c, linking this redox reaction to translocation of protons across the mitochondrial inner membrane, with protons being carried across the membrane as hydrogens on the quinol. In the process called Q cycle, 2 protons are consumed from the matrix, 4 protons are released into the intermembrane space and 2 electrons are passed to cytochrome c. The chain is Cytochrome b-c1 complex subunit 8 (Uqcrq) from Rattus norvegicus (Rat).